Here is a 312-residue protein sequence, read N- to C-terminus: Malate dehydrogenase (312 aa).

Residues 7–13 and Asp34 contribute to the NAD(+) site; that span reads GAAGGIG. Substrate contacts are provided by Arg81 and Arg87. Residues Asn94 and 117-119 contribute to the NAD(+) site; that span reads ITN. Substrate-binding residues include Asn119 and Arg153. His177 (proton acceptor) is an active-site residue. Met227 serves as a coordination point for NAD(+).

This sequence belongs to the LDH/MDH superfamily. MDH type 1 family. In terms of assembly, homodimer.

It catalyses the reaction (S)-malate + NAD(+) = oxaloacetate + NADH + H(+). In terms of biological role, catalyzes the reversible oxidation of malate to oxaloacetate. This chain is Malate dehydrogenase, found in Escherichia coli O139:H28 (strain E24377A / ETEC).